We begin with the raw amino-acid sequence, 1691 residues long: ADAMTS-like protein 3 (1691 aa).

An N-terminal signal peptide occupies residues 1–26; the sequence is MASWTSPWWVLIGMVFMHSPLPQTTA. Residues 75–124 enclose the TSP type-1 1 domain; that stretch reads DGNWDAWGDWSDCSRTCGGGASYSLRRCLTGRNCEGQNIRYKTCSNHDCP. 3 cysteine pairs are disulfide-bonded: C87–C118, C91–C123, and C102–C108. Residue N293 is glycosylated (N-linked (GlcNAc...) asparagine). TSP type-1 domains lie at 418 to 468, 478 to 535, and 564 to 626; these read PLPR…APKP, DCPK…IPCY, and EEPT…EACD. Disulfide bonds link C576–C620, C580–C625, and C591–C609. N-linked (GlcNAc...) asparagine glycosylation is present at N681. TSP type-1 domains are found at residues 703 to 760, 763 to 818, and 819 to 881; these read CPPR…FDCP, WHIE…ARTD, and CPPH…PECS. Residue N797 is glycosylated (N-linked (GlcNAc...) asparagine). Cystine bridges form between C831-C875, C835-C880, and C846-C863. Residues 896–992 form the Ig-like C2-type 1 domain; that stretch reads PQILSVQRVY…IAGSAQETVV (97 aa). N-linked (GlcNAc...) asparagine glycans are attached at residues N915 and N927. An intrachain disulfide couples C934 to C982. Residue N1102 is glycosylated (N-linked (GlcNAc...) asparagine). Residues 1146–1184 are disordered; it reads PPAAQLRGETGSVSQSSHAKNSGKLTFKPKGPVLMRQSQ. The segment covering 1156 to 1169 has biased composition (polar residues); the sequence is GSVSQSSHAKNSGK. The 95-residue stretch at 1185–1279 folds into the Ig-like C2-type 2 domain; it reads PPSISFNKTI…GSDVESSSVL (95 aa). N1191 carries N-linked (GlcNAc...) asparagine glycosylation. The cysteines at positions 1215 and 1263 are disulfide-linked. 10 N-linked (GlcNAc...) asparagine glycosylation sites follow: N1292, N1316, N1330, N1343, N1349, N1356, N1432, N1516, N1574, and N1591. Residues 1296–1378 form the Ig-like C2-type 3 domain; it reads PEHNHLSVVV…ATNALGKAVA (83 aa). A disulfide bridge links C1321 with C1367. 2 TSP type-1 domains span residues 1424–1482 and 1483–1545; these read QEPF…NIRD and CPAR…HPCV. The TSP type-1 10 domain maps to 1597–1644; the sequence is CDVCWHTGPWKPCTAACGRGFQSRKVDCIHTRSCKPVAKRHCVQKKKP. Residues 1655 to 1691 form the PLAC domain; sequence CDRDCTDTTHYCMFVKHLNLCSLDRYKQRCCQSCQEG.

In terms of processing, glycosylated. Can be O-fucosylated by POFUT2 on a serine or a threonine residue found within the consensus sequence C1-X(2)-(S/T)-C2-G of the TSP type-1 repeat domains where C1 and C2 are the first and second cysteine residue of the repeat, respectively. Fucosylated repeats can then be further glycosylated by the addition of a beta-1,3-glucose residue by the glucosyltransferase, B3GALTL. Fucosylation mediates the efficient secretion of ADAMTS family members. Can also be C-glycosylated with one or two mannose molecules on tryptophan residues within the consensus sequence W-X-X-W of the TPRs, and N-glycosylated. These other glycosylations can also facilitate secretion. Expressed in epithelial cells of the colon, fallopian tube, skin, breast, prostate, epididymis, liver, pancreatic islets and bile ducts, as well as by vascular endothelial cells, smooth muscle cells, fibroblasts, cortical and ganglionic neurons and cardiac myocytes. Also expressed by malignant epithelial cells in colon cancer, as well as breast, prostate, renal and skin tumors. Expression is significantly reduced in colon cancer compared to normal colon.

Its subcellular location is the secreted. The protein resides in the extracellular space. The protein localises to the extracellular matrix. The polypeptide is ADAMTS-like protein 3 (ADAMTSL3) (Homo sapiens (Human)).